A 208-amino-acid polypeptide reads, in one-letter code: Platelet-activating factor receptor (208 aa).

At 1 to 16 the chain is on the extracellular side; it reads MEPHDSSHVDSEFRYT. The chain crosses the membrane as a helical span at residues 17–38; sequence LFPIVYSIIFVLGVIANGYVLW. Residues 39–54 are Cytoplasmic-facing; it reads VFARLYPSKKFNEIKI. A helical membrane pass occupies residues 55 to 74; the sequence is FMVNLTMADMLFLITLPLWI. Over 75–91 the chain is Extracellular; sequence VYYQNGGNWIFPKFLCN. Cys90 and Cys173 are joined by a disulfide. A helical transmembrane segment spans residues 92-113; the sequence is LAGCLFFINTYCSVAFLGVITY. The Cytoplasmic portion of the chain corresponds to 114–133; sequence NRFQAVTRPIKTAQANTRKR. A helical membrane pass occupies residues 134 to 155; it reads GISLSLVIWVAIVGAASYFFIL. Over 156–184 the chain is Extracellular; it reads DSTNTVPNSAGSGNITRCFEHYEKGSVPV. Asn169 carries an N-linked (GlcNAc...) asparagine glycan. Residues 185–205 form a helical membrane-spanning segment; that stretch reads LIIHIFIVFSFFLVFLIILFC. The Cytoplasmic segment spans residues 206-208; it reads NLV.

This sequence belongs to the G-protein coupled receptor 1 family. Interacts with ARRB1.

Its subcellular location is the cell membrane. In terms of biological role, receptor for platelet activating factor, a chemotactic phospholipid mediator that possesses potent inflammatory, smooth-muscle contractile and hypotensive activity. Seems to mediate its action via a G protein that activates a phosphatidylinositol-calcium second messenger system. The sequence is that of Platelet-activating factor receptor (PTAFR) from Macaca mulatta (Rhesus macaque).